A 104-amino-acid chain; its full sequence is Glutaredoxin 1 (104 aa).

A Glutaredoxin domain is found at 1 to 96 (MNKSILHTII…KLLETQPKNK (96 aa)). The cysteines at positions 17 and 20 are disulfide-linked.

The protein belongs to the glutaredoxin family. As to quaternary structure, monomer.

The protein localises to the cytoplasm. Has a glutathione-disulfide oxidoreductase activity in the presence of NADPH and glutathione reductase. Reduces low molecular weight disulfides and proteins. In Rickettsia typhi (strain ATCC VR-144 / Wilmington), this protein is Glutaredoxin 1 (grxC1).